We begin with the raw amino-acid sequence, 442 residues long: Magnesium transporter MRS2-1 (442 aa).

Positions 1–30 (MSELKERLLPPRPASAMNLRDASVTRPSAS) are disordered. Transmembrane regions (helical) follow at residues 378–398 (LLLT…GIFG) and 414–434 (WVLI…VWFF). Positions 398-400 (GMN) match the Required for magnesium transport activity motif.

The protein belongs to the CorA metal ion transporter (MIT) (TC 1.A.35.5) family. Expressed in the whole plant except stems.

Its subcellular location is the membrane. In terms of biological role, magnesium transporter that may mediate the influx of magnesium. This chain is Magnesium transporter MRS2-1 (MRS2-1), found in Arabidopsis thaliana (Mouse-ear cress).